A 39-amino-acid chain; its full sequence is Bacteriocin E50-52 (39 aa).

The protein resides in the secreted. Bacteriocin active against the Gram-negative bacteria C.jejuni, Y.enterocolitica and Y.pseudotuberculosis, and the Gram-positive bacteria S.aureus, S.epidermidis, L.monocytogenes and Listeria spp. When added to the drinking water of chickens, causes a decrease in the levels of C.jejuni and S.enteritidis in the ceca, and in the levels of S.enteritidis in the liver and spleen. The chain is Bacteriocin E50-52 from Enterococcus faecium (Streptococcus faecium).